The sequence spans 341 residues: L-threonine 3-dehydrogenase (341 aa).

C38 provides a ligand contact to Zn(2+). Catalysis depends on charge relay system residues T40 and H43. Positions 63, 64, 93, 96, 99, and 107 each coordinate Zn(2+). NAD(+) contacts are provided by residues I175, D195, R200, 262–264 (LGI), and 286–287 (IY).

This sequence belongs to the zinc-containing alcohol dehydrogenase family. In terms of assembly, homotetramer. Requires Zn(2+) as cofactor.

The protein resides in the cytoplasm. It carries out the reaction L-threonine + NAD(+) = (2S)-2-amino-3-oxobutanoate + NADH + H(+). It participates in amino-acid degradation; L-threonine degradation via oxydo-reductase pathway; glycine from L-threonine: step 1/2. In terms of biological role, catalyzes the NAD(+)-dependent oxidation of L-threonine to 2-amino-3-ketobutyrate. This is L-threonine 3-dehydrogenase from Salmonella choleraesuis (strain SC-B67).